The following is a 247-amino-acid chain: MNVLSCSINTLNGLYDLSGVEVGQHFYWKIGGFQVHGQVLITSWVVIAILLGSAALAVRNPQTIPTGGQNFFEYVLEFIRDVSKTQIGEEYGPWVPFIGTMFLFIFVSNWSGALLPWKIIQLPHGELAAPTNDINTTVALALLTSVAYFYAGLTKKGLSYFGKYIQPTPILLPINILEDFTKPLSLSFRLFGNILADELVVVVLVSLVPSVVPIPVMFLGLFTSGIQALIFATLAAAYIGESMEGHH.

5 consecutive transmembrane segments (helical) span residues 38–58 (QVLITSWVVIAILLGSAALAV), 95–115 (VPFIGTMFLFIFVSNWSGALL), 134–154 (INTTVALALLTSVAYFYAGLT), 199–219 (LVVVVLVSLVPSVVPIPVMFL), and 220–240 (GLFTSGIQALIFATLAAAYIG).

It belongs to the ATPase A chain family. In terms of assembly, F-type ATPases have 2 components, CF(1) - the catalytic core - and CF(0) - the membrane proton channel. CF(1) has five subunits: alpha(3), beta(3), gamma(1), delta(1), epsilon(1). CF(0) has four main subunits: a, b, b' and c.

It localises to the plastid. The protein localises to the chloroplast thylakoid membrane. Its function is as follows. Key component of the proton channel; it plays a direct role in the translocation of protons across the membrane. The protein is ATP synthase subunit a, chloroplastic of Helianthus annuus (Common sunflower).